Reading from the N-terminus, the 219-residue chain is Kappa-scoloptoxin(11)-Ss1a (219 aa).

Residues 1-16 (MFYSHLLFFTFTFACS) form the signal peptide. A propeptide spanning residues 17 to 25 (SSLNRKTKR) is cleaved from the precursor.

In terms of processing, contains 8 disulfide bonds. In terms of tissue distribution, expressed by the venom gland.

Its subcellular location is the secreted. Its function is as follows. Voltage-gated potassium channel inhibitor. The sequence is that of Kappa-scoloptoxin(11)-Ss1a from Scolopendra dehaani (Thai centipede).